The primary structure comprises 698 residues: Adhesion G protein-coupled receptor F4 (698 aa).

Residues 1 to 19 form the signal peptide; the sequence is MKPWIAMVCCLVFFLTTEC. The Extracellular segment spans residues 20-409; that stretch reads SHSKPKTHRK…VKNTILNHIT (390 aa). N-linked (GlcNAc...) asparagine glycans are attached at residues asparagine 61, asparagine 168, asparagine 213, asparagine 268, asparagine 290, asparagine 344, and asparagine 375. The GAIN-B domain occupies 250-401; the sequence is RISHSSSEHS…SILMSSKPVK (152 aa). Disulfide bonds link cysteine 353–cysteine 380 and cysteine 368–cysteine 382. The interval 353-401 is GPS; sequence CVSWDPATGQWDESPCTVMSDINSTVKCRCRHTKAVTSFSILMSSKPVK. The chain crosses the membrane as a helical span at residues 410–430; the sequence is FIGLSISIFSLVLCLVIEAIV. The Cytoplasmic segment spans residues 431 to 444; it reads WSRVVVTEISYMRH. The chain crosses the membrane as a helical span at residues 445–465; the sequence is VCIVNIAVSLLTANVWFIIGS. A glycan (N-linked (GlcNAc...) asparagine) is linked at asparagine 466. Residues 466–486 lie on the Extracellular side of the membrane; it reads NFSANVQEDHKWCVAVTFLCH. A helical membrane pass occupies residues 487 to 507; sequence FFFLSLFFWMLFKALLIVYGI. At 508–518 the chain is on the cytoplasmic side; the sequence is LVVFRRMMKSR. Residues 519-539 form a helical membrane-spanning segment; sequence MMAIGFAIGYGCPLVIAVITV. Over 540–566 the chain is Extracellular; it reads TVTEPGEGYTRKDACWLNWNQTKALFA. The N-linked (GlcNAc...) asparagine glycan is linked to asparagine 559. Residues 567 to 587 form a helical membrane-spanning segment; sequence FAIPALAIVAVNLLVVLAVAI. Over 588–611 the chain is Cytoplasmic; the sequence is NTQRPLIGSSKSQDMAIVFRISKN. A helical membrane pass occupies residues 612 to 632; it reads VAILTPLLGLTWGFGLTTLLE. At 633 to 635 the chain is on the extracellular side; it reads GVH. A helical membrane pass occupies residues 636–656; sequence LVFHIIFALLNAFQGFFILLF. The Cytoplasmic portion of the chain corresponds to 657–698; that stretch reads GTIMDHKIRDALRMRVSSLKGKSRAAEKVSLSPANGSRILNR.

It belongs to the G-protein coupled receptor 2 family. Adhesion G-protein coupled receptor (ADGR) subfamily. In terms of tissue distribution, expressed in squamous epithelia.

It localises to the membrane. Its function is as follows. Orphan receptor. This chain is Adhesion G protein-coupled receptor F4 (Adgrf4), found in Mus musculus (Mouse).